Consider the following 122-residue polypeptide: Large ribosomal subunit protein uL18 (122 aa).

A compositionally biased stretch (basic residues) spans 1–19 (MTKLSRKLQTQKRHRRLRR). The segment at 1-21 (MTKLSRKLQTQKRHRRLRRSV) is disordered.

The protein belongs to the universal ribosomal protein uL18 family. As to quaternary structure, part of the 50S ribosomal subunit; part of the 5S rRNA/L5/L18/L25 subcomplex. Contacts the 5S and 23S rRNAs.

Functionally, this is one of the proteins that bind and probably mediate the attachment of the 5S RNA into the large ribosomal subunit, where it forms part of the central protuberance. The protein is Large ribosomal subunit protein uL18 of Prochlorococcus marinus (strain MIT 9312).